Consider the following 299-residue polypeptide: Tetrahydromethanopterin S-methyltransferase subunit E (299 aa).

Transmembrane regions (helical) follow at residues alanine 57–tryptophan 77, isoleucine 80–valine 100, isoleucine 133–leucine 153, leucine 158–isoleucine 178, tyrosine 226–leucine 246, and valine 262–isoleucine 282.

It belongs to the MtrE family. As to quaternary structure, the complex is composed of 8 subunits; MtrA, MtrB, MtrC, MtrD, MtrE, MtrF, MtrG and MtrH.

The protein resides in the cell membrane. The enzyme catalyses 5-methyl-5,6,7,8-tetrahydromethanopterin + coenzyme M + 2 Na(+)(in) = 5,6,7,8-tetrahydromethanopterin + methyl-coenzyme M + 2 Na(+)(out). Its pathway is one-carbon metabolism; methanogenesis from CO(2); methyl-coenzyme M from 5,10-methylene-5,6,7,8-tetrahydromethanopterin: step 2/2. Its function is as follows. Part of a complex that catalyzes the formation of methyl-coenzyme M and tetrahydromethanopterin from coenzyme M and methyl-tetrahydromethanopterin. This is an energy-conserving, sodium-ion translocating step. The sequence is that of Tetrahydromethanopterin S-methyltransferase subunit E from Methanococcus maripaludis (strain C7 / ATCC BAA-1331).